Reading from the N-terminus, the 385-residue chain is Probable caffeine synthase MTL1 (385 aa).

S-adenosyl-L-homocysteine-binding residues include tyrosine 18, cysteine 62, asparagine 67, aspartate 101, leucine 102, serine 140, and phenylalanine 141. The caffeine site is built by tyrosine 158, glutamine 161, and phenylalanine 162. A Mg(2+)-binding site is contributed by asparagine 179. A caffeine-binding site is contributed by threonine 238. Residues aspartate 261, phenylalanine 263, and asparagine 264 each coordinate Mg(2+). Position 369 (tyrosine 369) interacts with caffeine.

Belongs to the methyltransferase superfamily. Type-7 methyltransferase family. Mg(2+) serves as cofactor.

The protein operates within alkaloid biosynthesis. May be involved in the biosynthesis of caffeine. In Coffea canephora (Robusta coffee), this protein is Probable caffeine synthase MTL1.